The sequence spans 138 residues: Acidic phospholipase A2 Cvv-E6b (138 aa).

Residues 1 to 16 (MRTLWILAVLLLGVEG) form the signal peptide. Cystine bridges form between Cys42–Cys131, Cys44–Cys60, Cys59–Cys111, Cys65–Cys138, Cys66–Cys104, Cys73–Cys97, and Cys91–Cys102. Ca(2+)-binding residues include Tyr43, Gly45, and Gly47. His63 is an active-site residue. Residue Asp64 participates in Ca(2+) binding. Asp105 is a catalytic residue.

Ca(2+) is required as a cofactor. In terms of tissue distribution, expressed by the venom gland.

The protein localises to the secreted. It catalyses the reaction a 1,2-diacyl-sn-glycero-3-phosphocholine + H2O = a 1-acyl-sn-glycero-3-phosphocholine + a fatty acid + H(+). In terms of biological role, snake venom phospholipase A2 (PLA2) that shows very low inhibition of ADP-induced platelet aggregation in platelet-rich plasma of human, rabbit and guinea pig. PLA2 catalyzes the calcium-dependent hydrolysis of the 2-acyl groups in 3-sn-phosphoglycerides. In Crotalus viridis viridis (Prairie rattlesnake), this protein is Acidic phospholipase A2 Cvv-E6b.